Consider the following 514-residue polypeptide: MTGPAPSALRPEHPVARPLAQLVALFGLDVRGDLDGVEVTGAALASSAVEPGDLYVGVPGRNAHGAAYAAAAAEAGAVAVLTDGDGADLAAAAGLPIVVTADPRAALGAVAAWIHRTEDNAATLFGVTGTNGKTSVVYLLYAILGQLGIVAGLTSTAERRIGEHAITSTLTTPEATELHALLARMREEGVRAAAIEVSAQALSRHRVDGIEFDVAGFTNLSHDHLDDYTAMPDYFAAKLELFQPDRARRGVVTVDSEWGHRLVEQSRIPVTTLSSVAGSEADWRVTVLEETLARTAFALEGPGGRLLETSVPLLGAYNASNAALAIVMLVESGYDLDAIGAALERDGGIDAYIPGRAERLSGDRGPVVFIDYGHTPDAFSSTLAALRRVTAGRIVMVFGADGDRDITKRAEMGAIAARGADAVVITDFHPRWEDPATIRAALLEGARNAVPERDLYEVPDPRTAFRTALSLAGEGDVVLYAGPGHEDYQEAAGERIPYSARDDARLALREAGWL.

UDP-N-acetyl-alpha-D-muramoyl-L-alanyl-D-glutamate contacts are provided by L44 and S46. Residue 129-135 (GTNGKTS) coordinates ATP. Residues 171–172 (TT), S198, and R206 contribute to the UDP-N-acetyl-alpha-D-muramoyl-L-alanyl-D-glutamate site. K238 carries the N6-carboxylysine modification.

It belongs to the MurCDEF family. MurE subfamily. Carboxylation is probably crucial for Mg(2+) binding and, consequently, for the gamma-phosphate positioning of ATP.

Its subcellular location is the cytoplasm. It participates in cell wall biogenesis; peptidoglycan biosynthesis. Catalyzes the addition of an amino acid to the nucleotide precursor UDP-N-acetylmuramoyl-L-alanyl-D-glutamate (UMAG) in the biosynthesis of bacterial cell-wall peptidoglycan. The protein is UDP-N-acetylmuramyl-tripeptide synthetase of Leifsonia xyli subsp. xyli (strain CTCB07).